Consider the following 320-residue polypeptide: uncharacterized protein (320 aa).

A run of 7 helical transmembrane segments spans residues 107-127 (LSKENMLMLILSTIVAIAGIY), 131-151 (VALLIASMIIAPLLGPNIALS), 169-189 (LIAELIFVIILSMIAGHYLPI), 200-220 (ITLDFWSIIIALSAGIAGSLS), 228-248 (IAVGVMIAIALLPPLAVFGLL), 260-280 (ALILFLINMIAINLSAIVIFS), and 299-319 (TLYAILLWVTLFIAIFVLIIY).

The protein resides in the cell membrane. This is an uncharacterized protein from Methanocaldococcus jannaschii (strain ATCC 43067 / DSM 2661 / JAL-1 / JCM 10045 / NBRC 100440) (Methanococcus jannaschii).